The chain runs to 338 residues: D-erythrose-4-phosphate dehydrogenase (338 aa).

11 to 12 is a binding site for NAD(+); the sequence is RI. Residues 153–155, Arg-199, 212–213, and Arg-235 each bind substrate; these read SCT and TK. Cys-154 (nucleophile) is an active-site residue. NAD(+) is bound at residue Asn-317.

It belongs to the glyceraldehyde-3-phosphate dehydrogenase family. Epd subfamily. In terms of assembly, homotetramer.

It localises to the cytoplasm. It carries out the reaction D-erythrose 4-phosphate + NAD(+) + H2O = 4-phospho-D-erythronate + NADH + 2 H(+). It functions in the pathway cofactor biosynthesis; pyridoxine 5'-phosphate biosynthesis; pyridoxine 5'-phosphate from D-erythrose 4-phosphate: step 1/5. Its function is as follows. Catalyzes the NAD-dependent conversion of D-erythrose 4-phosphate to 4-phosphoerythronate. In Shewanella loihica (strain ATCC BAA-1088 / PV-4), this protein is D-erythrose-4-phosphate dehydrogenase.